The primary structure comprises 372 residues: Alanine racemase (372 aa).

Lys-33 acts as the Proton acceptor; specific for D-alanine in catalysis. N6-(pyridoxal phosphate)lysine is present on Lys-33. Arg-131 contacts substrate. Tyr-261 serves as the catalytic Proton acceptor; specific for L-alanine. Position 309 (Met-309) interacts with substrate.

It belongs to the alanine racemase family. It depends on pyridoxal 5'-phosphate as a cofactor.

The catalysed reaction is L-alanine = D-alanine. The protein operates within amino-acid biosynthesis; D-alanine biosynthesis; D-alanine from L-alanine: step 1/1. Its function is as follows. Catalyzes the interconversion of L-alanine and D-alanine. May also act on other amino acids. The polypeptide is Alanine racemase (alr) (Salinispora tropica (strain ATCC BAA-916 / DSM 44818 / JCM 13857 / NBRC 105044 / CNB-440)).